Reading from the N-terminus, the 488-residue chain is (S)-canadine synthase CYP719A21 (488 aa).

Residues 6-26 (LWILTLISTILAVFAAVLIIF) form a helical membrane-spanning segment. Cysteine 432 lines the heme pocket.

This sequence belongs to the cytochrome P450 family. Heme serves as cofactor.

The protein resides in the membrane. It catalyses the reaction (S)-tetrahydrocolumbamine + reduced [NADPH--hemoprotein reductase] + O2 = (S)-canadine + oxidized [NADPH--hemoprotein reductase] + 2 H2O + H(+). It functions in the pathway alkaloid biosynthesis. In terms of biological role, cytochrome P450 involved in the biosynthesis of the benzylisoquinoline alkaloid noscapine. Converts (S)-tetrahydrocolumbamine to (S)-canadine. The polypeptide is (S)-canadine synthase CYP719A21 (Papaver somniferum (Opium poppy)).